We begin with the raw amino-acid sequence, 27 residues long: Cupiennin-3c (27 aa).

In terms of tissue distribution, expressed by the venom gland.

The protein resides in the secreted. In Cupiennius salei (American wandering spider), this protein is Cupiennin-3c.